Consider the following 499-residue polypeptide: T-cell activation inhibitor, mitochondrial (499 aa).

Residues 206-233 (LRNSLPLRKELDRLKNELSELLQLSDIR) adopt a coiled-coil conformation.

Expressed in peripheral blood leukocytes, mainly in T-lymphocytes.

It localises to the mitochondrion. In terms of biological role, may regulate T-cell apoptosis. This chain is T-cell activation inhibitor, mitochondrial (TCAIM), found in Mus musculus (Mouse).